The chain runs to 180 residues: Ribosome maturation factor RimM (180 aa).

One can recognise a PRC barrel domain in the interval 99 to 172 (EDEFYQVDLI…FLVVDPVAAG (74 aa)).

Belongs to the RimM family. In terms of assembly, binds ribosomal protein uS19.

It is found in the cytoplasm. In terms of biological role, an accessory protein needed during the final step in the assembly of 30S ribosomal subunit, possibly for assembly of the head region. Essential for efficient processing of 16S rRNA. May be needed both before and after RbfA during the maturation of 16S rRNA. It has affinity for free ribosomal 30S subunits but not for 70S ribosomes. The polypeptide is Ribosome maturation factor RimM (Bartonella henselae (strain ATCC 49882 / DSM 28221 / CCUG 30454 / Houston 1) (Rochalimaea henselae)).